The following is a 1214-amino-acid chain: SWI/SNF complex subunit SMARCC2 (1214 aa).

Residues 1-274 are marR-like, BRCT and chromo domains module; it reads MAVRKKDGGP…PVSRRKKISA (274 aa). Positions 10 to 136 constitute a MarR-like domain; the sequence is PNVKYYEAAD…IEKSLVQNNC (127 aa). The 44-residue stretch at 140–183 folds into the BRCT; N-terminus domain; the sequence is PNIFLCPEIEPKLLGKLKDIIKRHQGTVTEDKNNASHVVYPVPG. Positions 189 to 217 constitute a Chromo domain; the sequence is EWVRPVMKRDKQVLLHWGYYPDSYDTWIP. Positions 233–257 constitute a BRCT; C-terminus domain; that stretch reads KPRKVHAKWILDTDTFNEWMNEEDY. A disordered region spans residues 257-413; the sequence is YEVNDDKNPV…GEQTKNPDLH (157 aa). The segment covering 275–284 has biased composition (polar residues); sequence KTLTDEVNSP. Phosphoserine occurs at positions 283, 286, 302, 304, and 306. At K312 the chain carries N6-(ADP-ribosyl)lysine. K326 is modified (N6-acetyllysine). A compositionally biased stretch (basic and acidic residues) spans 331-344; sequence HREEEQEDLTKDMD. 2 positions are modified to phosphoserine: S347 and S387. The span at 379-398 shows a compositional bias: acidic residues; it reads DLDEQEDESMETTGKDEDEN. Residues 424-521 enclose the SWIRM domain; that stretch reads IIIPSYAAWF…YQVDAESRPT (98 aa). T548 carries the post-translational modification Phosphothreonine. Residues K564, K566, K568, and K592 each participate in a glycyl lysine isopeptide (Lys-Gly) (interchain with G-Cter in SUMO2) cross-link. An SANT domain is found at 596 to 647; that stretch reads SATREWTEQETLLLLEALEMYKDDWNKVSEHVGSRTQDECILHFLRLPIEDP. A Glycyl lysine isopeptide (Lys-Gly) (interchain with G-Cter in SUMO2) cross-link involves residue K704. The disordered stretch occupies residues 724–852; the sequence is KVTGKADPAF…GERKTKVERD (129 aa). Basic and acidic residues-rich tracts occupy residues 747 to 777 and 784 to 852; these read EPER…EPRE and EEAK…VERD. K787 participates in a covalent cross-link: Glycyl lysine isopeptide (Lys-Gly) (interchain with G-Cter in SUMO2). At S813 the chain carries Phosphoserine. K848 is covalently cross-linked (Glycyl lysine isopeptide (Lys-Gly) (interchain with G-Cter in SUMO2)). Residues 907 to 934 are a coiled coil; the sequence is EELETIMDREREALEYQRQQLLADRQAF. Disordered stretches follow at residues 947 to 983, 997 to 1092, and 1182 to 1214; these read RQQH…PPAV, PAGS…PPPP, and LPSA…PPPQ. Residues 949–959 are compositionally biased toward low complexity; that stretch reads QHFQQMHQQQQ. Pro residues predominate over residues 960 to 974; the sequence is QPPPALPPGSQPIPP. Positions 997-1033 are enriched in low complexity; it reads PAGSGAPPGSLGPSEQIGQAGSTAGPQQQQPAGAPQP. Composition is skewed to pro residues over residues 1034–1051 and 1186–1202; these read GAVP…PSPF and SPLP…PTAP.

Belongs to the SMARCC family. As to quaternary structure, component of the multiprotein chromatin-remodeling complexes SWI/SNF: SWI/SNF-A (BAF), SWI/SNF-B (PBAF) and related complexes. The canonical complex contains a catalytic subunit (either SMARCA4/BRG1/BAF190A or SMARCA2/BRM/BAF190B) and at least SMARCE1, ACTL6A/BAF53, SMARCC1/BAF155, SMARCC2/BAF170, and SMARCB1/SNF5/BAF47. Other subunits specific to each of the complexes may also be present permitting several possible combinations developmentally and tissue specific. Component of the BAF complex, which includes at least actin (ACTB), ARID1A/BAF250A, ARID1B/BAF250B, SMARCA2/BRM, SMARCA4/BRG1, ACTL6A/BAF53, ACTL6B/BAF53B, SMARCE1/BAF57, SMARCC1/BAF155, SMARCC2/BAF170, SMARCB1/SNF5/INI1, and one or more SMARCD1/BAF60A, SMARCD2/BAF60B, or SMARCD3/BAF60C. In muscle cells, the BAF complex also contains DPF3. Component of neural progenitors-specific chromatin remodeling complex (npBAF complex) composed of at least, ARID1A/BAF250A or ARID1B/BAF250B, SMARCD1/BAF60A, SMARCD3/BAF60C, SMARCA2/BRM/BAF190B, SMARCA4/BRG1/BAF190A, SMARCB1/BAF47, SMARCC1/BAF155, SMARCE1/BAF57, SMARCC2/BAF170, PHF10/BAF45A, ACTL6A/BAF53A and actin. Component of neuron-specific chromatin remodeling complex (nBAF complex) composed of at least, ARID1A/BAF250A or ARID1B/BAF250B, SMARCD1/BAF60A, SMARCD3/BAF60C, SMARCA2/BRM/BAF190B, SMARCA4/BRG1/BAF190A, SMARCB1/BAF47, SMARCC1/BAF155, SMARCE1/BAF57, SMARCC2/BAF170, DPF1/BAF45B, DPF3/BAF45C, ACTL6B/BAF53B and actin. Component of the SWI/SNF-B (PBAF) chromatin remodeling complex, at least composed of SMARCA4/BRG1, SMARCB1/BAF47/SNF5, ACTL6A/BAF53A or ACTL6B/BAF53B, SMARCE1/BAF57, SMARCD1/BAF60A, SMARCD2/BAF60B, perhaps SMARCD3/BAF60C, SMARCC1/BAF155, SMARCC2/BAF170, PBRM1/BAF180, ARID2/BAF200 and actin. May also interact with the SIN3A histone deacetylase transcription repressor complex in conjunction with SMARCA2 and SMARCA4. Interacts with SMARD1. Interacts with KDM6B. Interaction with RCOR1. Interacts with DPF2. Interacts with ERCC6. Interacts with FOS. Mono-ADP-ribosylation at Lys-312 by SIRT6 promotes recruitment to the enhancer region of the Heme oxygenase-1 (HO-1) locus, leading to transcription activation of the locus. As to expression, ubiquitously expressed.

The protein resides in the nucleus. Involved in transcriptional activation and repression of select genes by chromatin remodeling (alteration of DNA-nucleosome topology). Component of SWI/SNF chromatin remodeling complexes that carry out key enzymatic activities, changing chromatin structure by altering DNA-histone contacts within a nucleosome in an ATP-dependent manner. Can stimulate the ATPase activity of the catalytic subunit of these complexes. May be required for CoREST dependent repression of neuronal specific gene promoters in non-neuronal cells. Belongs to the neural progenitors-specific chromatin remodeling complex (npBAF complex) and the neuron-specific chromatin remodeling complex (nBAF complex). During neural development a switch from a stem/progenitor to a postmitotic chromatin remodeling mechanism occurs as neurons exit the cell cycle and become committed to their adult state. The transition from proliferating neural stem/progenitor cells to postmitotic neurons requires a switch in subunit composition of the npBAF and nBAF complexes. As neural progenitors exit mitosis and differentiate into neurons, npBAF complexes which contain ACTL6A/BAF53A and PHF10/BAF45A, are exchanged for homologous alternative ACTL6B/BAF53B and DPF1/BAF45B or DPF3/BAF45C subunits in neuron-specific complexes (nBAF). The npBAF complex is essential for the self-renewal/proliferative capacity of the multipotent neural stem cells. The nBAF complex along with CREST plays a role regulating the activity of genes essential for dendrite growth. Critical regulator of myeloid differentiation, controlling granulocytopoiesis and the expression of genes involved in neutrophil granule formation. The polypeptide is SWI/SNF complex subunit SMARCC2 (SMARCC2) (Homo sapiens (Human)).